We begin with the raw amino-acid sequence, 1840 residues long: Sodium channel protein type 4 subunit alpha (1840 aa).

Topologically, residues 1–131 (MASSSLPNLV…RVAIKVLIHA (131 aa)) are cytoplasmic. The segment covering 36 to 60 (EARLQRNKQMEIEEPERKPRSDLEA) has biased composition (basic and acidic residues). Positions 36–63 (EARLQRNKQMEIEEPERKPRSDLEAGKN) are disordered. The stretch at 113 to 448 (LLSPFSIVRR…VVAMAYAEQN (336 aa)) is one I repeat. A helical membrane pass occupies residues 132–150 (LFSMFIMITILTNCVFMTM). Residues 151 to 157 (SNPPSWS) are Extracellular-facing. The chain crosses the membrane as a helical span at residues 158 to 178 (KHVEYTFTGIYTFESLIKMLA). Residues 179–192 (RGFCIDDFTFLRDP) are Cytoplasmic-facing. The helical transmembrane segment at 193–210 (WNWLDFSVITMAYVTEFV) threads the bilayer. At 211–216 (DLGNIS) the chain is on the extracellular side. The helical transmembrane segment at 217–233 (ALRTFRVLRALKTITVI) threads the bilayer. Residues 234–252 (PGLKTIVGALIQSVKKLSD) lie on the Cytoplasmic side of the membrane. The chain crosses the membrane as a helical span at residues 253–272 (VMILTVFCLSVFALVGLQLF). Residues 273 to 385 (MGNLRQKCVR…PNYGYTSYDT (113 aa)) are Extracellular-facing. Residues Cys-280 and Cys-354 are joined by a disulfide bond. N-linked (GlcNAc...) asparagine glycans are attached at residues Asn-288, Asn-291, Asn-297, Asn-303, Asn-309, Asn-315, Asn-327, and Asn-356. Cysteines 363 and 369 form a disulfide. Positions 386 to 410 (FSWAFLALFRLMTQDYWENLFQLTL) form an intramembrane region, pore-forming. At 411–417 (RAAGKTY) the chain is on the extracellular side. A helical membrane pass occupies residues 418-438 (MIFFVVIIFLGSFYLINLILA). Topologically, residues 439-572 (VVAMAYAEQN…HIIYLIVMDP (134 aa)) are cytoplasmic. A disordered region spans residues 481–522 (AAQALESGEEADGDPTHNKDCNGSLDASGEKGPPRPSCSADS). Ser-487 is subject to Phosphoserine. The II repeat unit spans residues 554–826 (CCAPWVKFKH…QIAIGRIKWG (273 aa)). Residues 573–591 (FVDLGITICIVLNTLFMAM) form a helical membrane-spanning segment. The Extracellular segment spans residues 592-602 (EHYPMTEHFDN). A helical membrane pass occupies residues 603–622 (VLSVGNLVFTGIFTAEMVLK). Over 623–636 (LIAMDPYEYFQQGW) the chain is Cytoplasmic. Residues 637 to 656 (NIFDSFIVTLSLVELGLANV) traverse the membrane as a helical segment. Over 657-658 (QG) the chain is Extracellular. The chain crosses the membrane as a helical span at residues 659–676 (LSVLRSFRLLRVFKLAKS). The Cytoplasmic segment spans residues 677–692 (WPTLNMLIKIIGNSVG). The helical transmembrane segment at 693–711 (ALGNLTLVLAIIVFIFAVV) threads the bilayer. Residues 712-740 (GMQLFGKSYKECVCKIASDCNLPRWHMND) are Extracellular-facing. Cysteines 725 and 731 form a disulfide. The segment at residues 741 to 761 (FFHSFLIVFRILCGEWIETMW) is an intramembrane region (pore-forming). The Extracellular portion of the chain corresponds to 762 to 772 (DCMEVAGQAMC). A disulfide bridge links Cys-763 with Cys-772. Residues 773 to 791 (LTVFLMVMVIGNLVVLNLF) form a helical membrane-spanning segment. Residues 792–1025 (LALLLSSFSA…ACFKIVEHNW (234 aa)) are Cytoplasmic-facing. Disordered stretches follow at residues 854 to 884 (EPGG…LKDN) and 925 to 983 (DLEM…GEQP). Basic and acidic residues predominate over residues 868 to 884 (EDEKKEPPPEDKELKDN). Composition is skewed to acidic residues over residues 925–940 (DLEM…FSEP) and 968–983 (EDPE…GEQP). An III repeat occupies 1006–1319 (RGKMWWTLRR…KKYYNAMKKL (314 aa)). A helical transmembrane segment spans residues 1026–1043 (FETFIVFMILLSSGALAF). At 1044 to 1056 (EDIYIEQRRVIRT) the chain is on the extracellular side. The helical transmembrane segment at 1057–1075 (ILEYADKVFTYIFILEMLL) threads the bilayer. The Cytoplasmic portion of the chain corresponds to 1076-1089 (KWVAYGFKVYFTNA). Residues 1090 to 1108 (WCWLDFLIVDVSIISLVAN) form a helical membrane-spanning segment. Over 1109–1116 (WLGYSELG) the chain is Extracellular. Residues 1117 to 1135 (PIKSLRTLRALRPLRALSR) form a helical membrane-spanning segment. Topologically, residues 1136 to 1152 (FEGMRVVVNALLGAIPS) are cytoplasmic. Residues 1153–1172 (IMNVLLVCLIFWLIFSIMGV) form a helical membrane-spanning segment. The Extracellular portion of the chain corresponds to 1173 to 1223 (NLFAGKFYYCVNTTTSERFDISVVNNKSESESLMYTGQVRWMNVKVNYDNV). Asn-1198 is a glycosylation site (N-linked (GlcNAc...) asparagine). The pore-forming intramembrane region spans 1224–1245 (GLGYLSLLQVATFKGWMDIMYA). At 1246 to 1262 (AVDSREKEEQPHYEVNL) the chain is on the extracellular side. A helical transmembrane segment spans residues 1263–1284 (YMYLYFVIFIIFGSFFTLNLFI). Residues 1285–1347 (GVIIDNFNQQ…MVYDFVTKQV (63 aa)) lie on the Cytoplasmic side of the membrane. Positions 1303–1305 (IFM) are important for rapid channel inactivation. The IV repeat unit spans residues 1328-1626 (IPRPQNKIQG…WEKFDPDATQ (299 aa)). The chain crosses the membrane as a helical span at residues 1348–1365 (FDISIMILICLNMVTMMV). Residues 1366–1376 (ETDDQSQLKVD) lie on the Extracellular side of the membrane. A helical transmembrane segment spans residues 1377–1395 (ILYNINMVFIIIFTGECVL). The Cytoplasmic segment spans residues 1396 to 1407 (KMFALRHYYFTI). The chain crosses the membrane as a helical span at residues 1408–1425 (GWNIFDFVVVILSIVGLA). At 1426–1438 (LSDLIQKYFVSPT) the chain is on the extracellular side. A helical transmembrane segment spans residues 1439–1455 (LFRVIRLARIGRVLRLI). The Cytoplasmic portion of the chain corresponds to 1456 to 1474 (RGAKGIRTLLFALMMSLPA). Residues 1475–1492 (LFNIGLLLFLVMFIYSIF) form a helical membrane-spanning segment. The Extracellular portion of the chain corresponds to 1493–1514 (GMSNFAYVKKESGIDDMFNFET). Positions 1515–1537 (FGNSIICLFEITTSAGWDGLLNP) form an intramembrane region, pore-forming. Topologically, residues 1538–1567 (ILNSGPPDCDPTLENPGTNVRGDCGNPSIG) are extracellular. A disulfide bridge connects residues Cys-1546 and Cys-1561. Residues 1568-1590 (ICFFCSYIIISFLIVVNMYIAII) traverse the membrane as a helical segment. At 1591–1840 (LENFNVATEE…VRPGVKESLV (250 aa)) the chain is on the cytoplasmic side. Residues 1720 to 1749 (EEVCAIKIQRAYRRHLLQRSVKQASYMYRH) enclose the IQ domain. The segment at 1775 to 1840 (HEKEGDGVQS…VRPGVKESLV (66 aa)) is disordered. Residues 1804–1813 (PTSSSDTALT) show a composition bias toward low complexity. The span at 1814–1824 (PSPPPLPPSSS) shows a compositional bias: pro residues.

This sequence belongs to the sodium channel (TC 1.A.1.10) family. Nav1.4/SCN4A subfamily. As to quaternary structure, the Nav1.4 voltage-gated sodium channel consists of an ion-conducting alpha subunit SCN4A which is functional on its own and a regulatory beta subunit SCN1B. SCN1B strongly enhances the presence of SCN4A at the cell surface. SCN1B is also required for rapid channel inactivation and recovery after inactivation. It prevents the decrease of channel activity in response to repetitive, high-frequency depolarizations. Interacts with the syntrophins SNTA1, SNTB1 and SNTB2 (via PDZ domain); probably links SCN4A to the actin cytoskeleton and the extracellular matrix via the dystrophin-associated protein complex and regulates its localization in muscle cells. Interacts with TMEM233; probable regulator of the channel. Detected in skeletal muscle.

It is found in the cell membrane. The enzyme catalyses Na(+)(in) = Na(+)(out). Potently inhibited by tetrodotoxin and saxitoxin. Inhibited by the conotoxin GVIIJ. Pore-forming subunit of Nav1.4, a voltage-gated sodium (Nav) channel that directly mediates the depolarizing phase of action potentials in excitable membranes. Navs, also called VGSCs (voltage-gated sodium channels) or VDSCs (voltage-dependent sodium channels), operate by switching between closed and open conformations depending on the voltage difference across the membrane. In the open conformation they allow Na(+) ions to selectively pass through the pore, along their electrochemical gradient. The influx of Na+ ions provokes membrane depolarization, initiating the propagation of electrical signals throughout cells and tissues. Highly expressed in skeletal muscles, Nav1.4 generates the action potential crucial for muscle contraction. This is Sodium channel protein type 4 subunit alpha from Rattus norvegicus (Rat).